A 367-amino-acid polypeptide reads, in one-letter code: Alginate lyase (367 aa).

An N-terminal signal peptide occupies residues 1-24; the sequence is MTIINRKTAPALLALALFGGAAQA. Substrate contacts are provided by residues 63-64, 136-137, and Tyr254; these read SK and HT.

It belongs to the polysaccharide lyase 5 family.

The protein localises to the periplasm. It carries out the reaction Eliminative cleavage of alginate to give oligosaccharides with 4-deoxy-alpha-L-erythro-hex-4-enuronosyl groups at their non-reducing ends and beta-D-mannuronate at their reducing end.. Its function is as follows. Catalyzes the depolymerization of alginate by cleaving the beta-1,4 glycosidic bond between two adjacent sugar residues via a beta-elimination mechanism. May serve to degrade mislocalized alginate that is trapped in the periplasmic space. This chain is Alginate lyase, found in Pseudomonas entomophila (strain L48).